The sequence spans 78 residues: Neurogranin (78 aa).

N-acetylmethionine is present on M1. A disulfide bridge connects residues C3 and C51. The 22-residue stretch at A26–K47 folds into the IQ domain. At S36 the chain carries Phosphoserine; by PHK and PKC. The interval G39–D78 is disordered. The Collagen-like domain maps to S48–D78. A compositionally biased stretch (gly residues) spans K54–D78. A Citrulline; partial modification is found at R68. Residue R68 is modified to Omega-N-methylarginine.

Belongs to the neurogranin family. In terms of assembly, interacts with apo-calmodulin; this interaction decreases the affinity of calmodulin for calcium ions. Post-translationally, disulfide bond formation is redox-sensitive. The cysteine residues are readily oxidized by several nitric acid (NO) donors and other oxidants to form intramolecular disulfide. Cys-51 can form a disulfide with any other of the cysteine residues with an order of reactivity Cys-9 &gt; Cys-4 &gt; Cys-3. Phosphorylated at Ser-36 by PHK and PKC, phosphorylation prevents interaction with Calmodulin and interrupts several learning- and memory-associated functions.

The protein resides in the cytoplasm. It is found in the synapse. It localises to the cell projection. The protein localises to the dendritic spine. Regulates the affinity of calmodulin for calcium. Involved in synaptic plasticity and spatial learning. This chain is Neurogranin (Nrgn), found in Mus musculus (Mouse).